The sequence spans 196 residues: MRLPLLLSAGVLLVVSLPCPPCRALLSRGPIPGARQAAQHPQPLDFFQLPPQPQQPQQPQARPVLYRMGEEYFLRLGNLNKSPAAPLLPASSPVAGGSGSRLSPDEAAANFFRALLQQLPLPRRQLDSPAGPAERGEENALGSRQETPERERRSEEPPISLDLTFHLLREVLEMARAEQLAQQAHSNRKLMEIIGK.

The signal sequence occupies residues 1–24; the sequence is MRLPLLLSAGVLLVVSLPCPPCRA. A propeptide spanning residues 25 to 153 is cleaved from the precursor; the sequence is LLSRGPIPGA…RQETPERERR (129 aa). The interval 122–158 is disordered; it reads PRRQLDSPAGPAERGEENALGSRQETPERERRSEEPP. The span at 146–156 shows a compositional bias: basic and acidic residues; the sequence is ETPERERRSEE. Isoleucine 194 carries the isoleucine amide modification.

Belongs to the sauvagine/corticotropin-releasing factor/urotensin I family. In terms of assembly, interacts (via C-terminus) with CRFR1 (via N-terminal extracellular domain). As to expression, produced by the hypothalamus.

It localises to the secreted. Functionally, hormone regulating the release of corticotropin from pituitary gland. Induces NLRP6 in intestinal epithelial cells, hence may influence gut microbiota profile. The sequence is that of Corticoliberin (CRH) from Canis lupus familiaris (Dog).